Consider the following 335-residue polypeptide: Holliday junction branch migration complex subunit RuvB (335 aa).

A large ATPase domain (RuvB-L) region spans residues 1–181; the sequence is MTRILDNDLI…FGITGHMEYY (181 aa). Residues leucine 20, arginine 21, glycine 62, lysine 65, threonine 66, threonine 67, 128 to 130, arginine 171, tyrosine 181, and arginine 218 each bind ATP; that span reads EDF. Threonine 66 contributes to the Mg(2+) binding site. The segment at 182–252 is small ATPAse domain (RuvB-S); the sequence is QTADLTEIVE…ITDKALTMLD (71 aa). The segment at 255–335 is head domain (RuvB-H); it reads QEGLDYVDQK…GYPYEKTIKT (81 aa). DNA is bound by residues arginine 291, arginine 310, arginine 312, and arginine 315.

This sequence belongs to the RuvB family. In terms of assembly, homohexamer. Forms an RuvA(8)-RuvB(12)-Holliday junction (HJ) complex. HJ DNA is sandwiched between 2 RuvA tetramers; dsDNA enters through RuvA and exits via RuvB. An RuvB hexamer assembles on each DNA strand where it exits the tetramer. Each RuvB hexamer is contacted by two RuvA subunits (via domain III) on 2 adjacent RuvB subunits; this complex drives branch migration. In the full resolvosome a probable DNA-RuvA(4)-RuvB(12)-RuvC(2) complex forms which resolves the HJ.

The protein localises to the cytoplasm. It catalyses the reaction ATP + H2O = ADP + phosphate + H(+). Functionally, the RuvA-RuvB-RuvC complex processes Holliday junction (HJ) DNA during genetic recombination and DNA repair, while the RuvA-RuvB complex plays an important role in the rescue of blocked DNA replication forks via replication fork reversal (RFR). RuvA specifically binds to HJ cruciform DNA, conferring on it an open structure. The RuvB hexamer acts as an ATP-dependent pump, pulling dsDNA into and through the RuvAB complex. RuvB forms 2 homohexamers on either side of HJ DNA bound by 1 or 2 RuvA tetramers; 4 subunits per hexamer contact DNA at a time. Coordinated motions by a converter formed by DNA-disengaged RuvB subunits stimulates ATP hydrolysis and nucleotide exchange. Immobilization of the converter enables RuvB to convert the ATP-contained energy into a lever motion, pulling 2 nucleotides of DNA out of the RuvA tetramer per ATP hydrolyzed, thus driving DNA branch migration. The RuvB motors rotate together with the DNA substrate, which together with the progressing nucleotide cycle form the mechanistic basis for DNA recombination by continuous HJ branch migration. Branch migration allows RuvC to scan DNA until it finds its consensus sequence, where it cleaves and resolves cruciform DNA. The polypeptide is Holliday junction branch migration complex subunit RuvB (Streptococcus equi subsp. equi (strain 4047)).